Here is a 426-residue protein sequence, read N- to C-terminus: MALRGSHRLDDFIRRCSALTLFHSQAPSRRVSHCGRDRRQQQDPPGQGRQEQQESGGGHWSRFGWRSLIRFFVPFSLGAVASSLVIKREELTPTITAKAMSGRRRDFNFIADVVAGCADSVVYIEIKDTRHFDYFSGQPITASNGSGFIIEQNGLILTNAHVVINKPHTMVQVRLSDGRTFPATIEDVDQTSDLATLRIQVSNLSVMRLGKSSTLRSGEWVVALGSPLALSNTVTAGVISSTQRASQELGLRNRDINYLQTDAAITFGNSGGPLVNLDGEAIGVNSMKVTAGISFAIPIDYVKVFLERAAERRKKGAAYKTGYPVKRYMGITMLTLTPDILFELKSRSQNMPSNLTHGVLVWKVIVGSPAHSGGLQPGDIVTHINKKEIKNSSDVYDALADNSKHLDIVILRGVKQMHVTITPEDP.

The N-terminal 30 residues, M1–R30, are a transit peptide targeting the mitochondrion. Residues R30–H59 form a disordered region. Positions V31 to G78 are excised as a propeptide. Positions Q42 to E54 are enriched in low complexity. A helical membrane pass occupies residues L68–I86. Residues A79–S82 carry the IAP-binding motif. Residues S143–L306 are serine protease. Active-site charge relay system residues include H161, D193, and S270. The region spanning M329–V414 is the PDZ domain.

The protein belongs to the peptidase S1C family. As to quaternary structure, interacts with th/DIAP1 (via BIR 2 domain).

The protein resides in the mitochondrion intermembrane space. Its subcellular location is the mitochondrion membrane. The enzyme catalyses Cleavage of non-polar aliphatic amino-acids at the P1 position, with a preference for Val, Ile and Met. At the P2 and P3 positions, Arg is selected most strongly with a secondary preference for other hydrophilic residues.. In terms of biological role, serine protease that shows proteolytic activity against a non-specific substrate beta-casein. Promotes or induces cell death either by direct binding to and inhibition of BIRC proteins (also called inhibitor of apoptosis proteins, IAPs), leading to an increase in caspase activity, or by a BIRC inhibition-independent, caspase-independent and serine protease activity-dependent mechanism. Can antagonize antiapoptotic activity of th/Diap1 by directly inducing the degradation of th/Diap1. In Drosophila ananassae (Fruit fly), this protein is Serine protease HTRA2, mitochondrial.